The chain runs to 444 residues: Phosphoglucosamine mutase (444 aa).

The Phosphoserine intermediate role is filled by S102. Mg(2+)-binding residues include S102, D241, D243, and D245. At S102 the chain carries Phosphoserine.

Belongs to the phosphohexose mutase family. The cofactor is Mg(2+). In terms of processing, activated by phosphorylation.

The enzyme catalyses alpha-D-glucosamine 1-phosphate = D-glucosamine 6-phosphate. Catalyzes the conversion of glucosamine-6-phosphate to glucosamine-1-phosphate. This chain is Phosphoglucosamine mutase, found in Buchnera aphidicola subsp. Acyrthosiphon pisum (strain 5A).